The chain runs to 953 residues: Translation initiation factor IF-2 (953 aa).

2 disordered regions span residues 51 to 242 and 279 to 363; these read SKAS…QEAK and TKLK…TERK. Basic and acidic residues-rich tracts occupy residues 80–89 and 98–111; these read TGSEHVEKTQ and FKAE…EQAA. A compositionally biased stretch (polar residues) spans 131 to 140; it reads QPNNHQTNEQ. Positions 149-188 are enriched in basic and acidic residues; sequence SQGDTNDKRIERKASNVSPRHDNHQLVGDRNRSFAKENHK. Residues 191 to 207 are compositionally biased toward polar residues; it reads RFTNQKKQGRQEPQSKS. Residues 229–242 are compositionally biased toward basic and acidic residues; the sequence is RQSETRFRAQQEAK. Positions 282–291 are enriched in polar residues; sequence KSSNISAKST. Residues 300-317 are compositionally biased toward basic and acidic residues; that stretch reads ARPEKNRELTHHSQEGQK. The segment covering 322–338 has biased composition (low complexity); it reads SWNSQNQVRNQKNSNWN. Basic residues predominate over residues 339 to 348; the sequence is KNKKTKKGKN. Positions 454–623 constitute a tr-type G domain; that stretch reads ERAPVVTIMG…LLVAEVEELK (170 aa). The interval 463-470 is G1; it reads GHVDHGKT. 463–470 contributes to the GTP binding site; it reads GHVDHGKT. The tract at residues 488–492 is G2; it reads GITQH. Residues 509–512 are G3; it reads DTPG. GTP-binding positions include 509-513 and 563-566; these read DTPGH and NKID. The G4 stretch occupies residues 563 to 566; sequence NKID. Residues 599–601 form a G5 region; the sequence is SAK.

This sequence belongs to the TRAFAC class translation factor GTPase superfamily. Classic translation factor GTPase family. IF-2 subfamily.

The protein resides in the cytoplasm. Its function is as follows. One of the essential components for the initiation of protein synthesis. Protects formylmethionyl-tRNA from spontaneous hydrolysis and promotes its binding to the 30S ribosomal subunits. Also involved in the hydrolysis of GTP during the formation of the 70S ribosomal complex. The polypeptide is Translation initiation factor IF-2 (Streptococcus pyogenes serotype M49 (strain NZ131)).